Consider the following 199-residue polypeptide: MKQLVLASGNAGKLEELRAMLAGLPLRVVAQGELGVEDVPETGLTFVENALIKARHASAVTGLPALADDSGLIVDALDGAPGLYSARYAGSPTNALANNAKLLDAMREVPSDRRSARFYAVIVLLRHPEDPQPLIAEGSWEGVITTQPRGDGGFGYNPVFLDPVYGLTAAEMDTALKNRLSHRAVALATLQHKLHAMSL.

8-13 (SGNAGK) provides a ligand contact to substrate. D69 (proton acceptor) is an active-site residue. A Mg(2+)-binding site is contributed by D69. Substrate is bound by residues S70, 154 to 157 (FGYN), K177, and 182 to 183 (HR).

It belongs to the HAM1 NTPase family. In terms of assembly, homodimer. The cofactor is Mg(2+).

It catalyses the reaction XTP + H2O = XMP + diphosphate + H(+). The catalysed reaction is dITP + H2O = dIMP + diphosphate + H(+). The enzyme catalyses ITP + H2O = IMP + diphosphate + H(+). Pyrophosphatase that catalyzes the hydrolysis of nucleoside triphosphates to their monophosphate derivatives, with a high preference for the non-canonical purine nucleotides XTP (xanthosine triphosphate), dITP (deoxyinosine triphosphate) and ITP. Seems to function as a house-cleaning enzyme that removes non-canonical purine nucleotides from the nucleotide pool, thus preventing their incorporation into DNA/RNA and avoiding chromosomal lesions. This Xanthomonas axonopodis pv. citri (strain 306) protein is dITP/XTP pyrophosphatase.